The chain runs to 551 residues: Glucans biosynthesis protein D (551 aa).

The tat-type signal signal peptide spans 1–32 (MNRRRFIKGSMAMAAVCGSSGIASLFSQAAFA).

It belongs to the OpgD/OpgG family. Post-translationally, predicted to be exported by the Tat system. The position of the signal peptide cleavage has not been experimentally proven.

It localises to the periplasm. It functions in the pathway glycan metabolism; osmoregulated periplasmic glucan (OPG) biosynthesis. Probably involved in the control of the structural glucose backbone of osmoregulated periplasmic glucans (OPGs). In Salmonella enteritidis PT4 (strain P125109), this protein is Glucans biosynthesis protein D.